Here is a 226-residue protein sequence, read N- to C-terminus: Pre-mRNA-splicing factor SPF27 (226 aa).

Position 2 is an N-acetylalanine (A2). At S94 the chain carries Phosphoserine. Residues Y139–R223 adopt a coiled-coil conformation.

It belongs to the SPF27 family. In terms of assembly, component of the pre-catalytic and catalytic spliceosome complexes. Component of the postcatalytic spliceosome P complex. Component of the PRP19-CDC5L splicing complex composed of a core complex comprising a homotetramer of PRPF19, CDC5L, PLRG1 and BCAS2, and at least three less stably associated proteins CTNNBL1, CWC15 and HSPA8. Interacts directly in the complex with PRPF19, CDC5L and PLRG1.

Its subcellular location is the nucleus. It is found in the nucleolus. Its function is as follows. Required for pre-mRNA splicing as component of the activated spliceosome. Component of the PRP19-CDC5L complex that forms an integral part of the spliceosome and is required for activating pre-mRNA splicing. May have a scaffolding role in the spliceosome assembly as it contacts all other components of the core complex. The PRP19-CDC5L complex may also play a role in the response to DNA damage (DDR). This Pongo abelii (Sumatran orangutan) protein is Pre-mRNA-splicing factor SPF27 (BCAS2).